The sequence spans 203 residues: Holliday junction branch migration complex subunit RuvA (203 aa).

Positions 1–62 (MYEYFLGQVT…ENGMSLFGFF (62 aa)) are domain I. The interval 63-141 (DADEKALFEK…DLNVDVTGQT (79 aa)) is domain II. A flexible linker region spans residues 142–148 (ALDVDAP). A domain III region spans residues 149–203 (AVDGALADALAALEALGYSKADVKKVTKKLETFSQTQGADTNTLLSEGLRLLMKK).

The protein belongs to the RuvA family. In terms of assembly, homotetramer. Forms an RuvA(8)-RuvB(12)-Holliday junction (HJ) complex. HJ DNA is sandwiched between 2 RuvA tetramers; dsDNA enters through RuvA and exits via RuvB. An RuvB hexamer assembles on each DNA strand where it exits the tetramer. Each RuvB hexamer is contacted by two RuvA subunits (via domain III) on 2 adjacent RuvB subunits; this complex drives branch migration. In the full resolvosome a probable DNA-RuvA(4)-RuvB(12)-RuvC(2) complex forms which resolves the HJ.

It is found in the cytoplasm. Its function is as follows. The RuvA-RuvB-RuvC complex processes Holliday junction (HJ) DNA during genetic recombination and DNA repair, while the RuvA-RuvB complex plays an important role in the rescue of blocked DNA replication forks via replication fork reversal (RFR). RuvA specifically binds to HJ cruciform DNA, conferring on it an open structure. The RuvB hexamer acts as an ATP-dependent pump, pulling dsDNA into and through the RuvAB complex. HJ branch migration allows RuvC to scan DNA until it finds its consensus sequence, where it cleaves and resolves the cruciform DNA. This Lactiplantibacillus plantarum (strain ATCC BAA-793 / NCIMB 8826 / WCFS1) (Lactobacillus plantarum) protein is Holliday junction branch migration complex subunit RuvA.